The following is a 481-amino-acid chain: MTTFVDRVVLHLQAGDGGHGCVSIHREKFKPFGGPDGGNGGHGGSVSLVVDPQVHTLLDFHFRPHVKASNGKGGAGSNRDGANGADLVLRVPNGTVVQTTGGTVLADLVGAGTTFEVARGGRGGRGNAALANARRKAPGFAELGEPGDKLDAVLELKSVADIGLVGYPSAGKSSLISVISAAKPKIADYPFTTLVPNLGVVRVDNHTFTVADVPGLIPGAATGKGLGLEFLRHVERCAVLVHVVDTATLETARDPVADIDAIEAELTAYGGLADRPRLVALNKIDVPDGRDLAEIVRPDLEARGFRVFEVSAATREGLKELMFAMGELVAAARAAAPPVEPTRIVIRPKAVDDAGFTVEAAPDGAWVVRGTRPERWIRQTNFDNEEAVGYLADRLARLGVEEKLGKAGAQAGDLVRIGEREFDWHPTLYAEFVPGVRGGDQRLAEKTQRPSAAERLAARKARRQRPGDEPESDELDGDSGE.

Residues 2–159 form the Obg domain; sequence TTFVDRVVLH…LDAVLELKSV (158 aa). The region spanning 160–330 is the OBG-type G domain; sequence ADIGLVGYPS…LMFAMGELVA (171 aa). Residues 166-173, 191-195, 212-215, 282-285, and 311-313 each bind GTP; these read GYPSAGKS, FTTLV, DVPG, NKID, and SAA. The Mg(2+) site is built by Ser-173 and Thr-193. The OCT domain maps to 348-426; that stretch reads PKAVDDAGFT…IGEREFDWHP (79 aa). Residues 440–481 form a disordered region; that stretch reads DQRLAEKTQRPSAAERLAARKARRQRPGDEPESDELDGDSGE. Acidic residues predominate over residues 469–481; the sequence is EPESDELDGDSGE.

Belongs to the TRAFAC class OBG-HflX-like GTPase superfamily. OBG GTPase family. Monomer. The cofactor is Mg(2+).

Its subcellular location is the cytoplasm. Functionally, an essential GTPase which binds GTP, GDP and possibly (p)ppGpp with moderate affinity, with high nucleotide exchange rates and a fairly low GTP hydrolysis rate. Plays a role in control of the cell cycle, stress response, ribosome biogenesis and in those bacteria that undergo differentiation, in morphogenesis control. This Salinispora arenicola (strain CNS-205) protein is GTPase Obg.